A 249-amino-acid chain; its full sequence is MSNQNKVLSLGLLLLAAVAAWYLWNKKNKKSGSQYVPASSIVEPFMPSLTYKVDKVYDASAPFGGQGNGDFMSVPGTFQSMVPPRFGMLDGAVVSVPTKNGSINPGIAPLYNNLDQDAMAFNPSSPLQQGIMDDNGEMIQPVVYDRIMYANRRSRLLEGSDFIRGDLPIFPQNLGWFSPSVQPHIDLRKGIVDNYDKDTADQLKLLQMKSEGRFDRAFEGEMVPPNTLIPSYGTFINPSVGDVEIVNFE.

An N-terminal signal peptide occupies residues methionine 1–alanine 20.

This sequence belongs to the IIV-6 117L family.

This is an uncharacterized protein from Acheta domesticus (House cricket).